Consider the following 295-residue polypeptide: Pyridoxal 5'-phosphate synthase subunit PdxS (295 aa).

D25 contributes to the D-ribose 5-phosphate binding site. K82 (schiff-base intermediate with D-ribose 5-phosphate) is an active-site residue. Position 154 (G154) interacts with D-ribose 5-phosphate. R166 is a binding site for D-glyceraldehyde 3-phosphate. D-ribose 5-phosphate is bound by residues G215 and 236–237; that span reads GS.

The protein belongs to the PdxS/SNZ family. In the presence of PdxT, forms a dodecamer of heterodimers.

The catalysed reaction is aldehydo-D-ribose 5-phosphate + D-glyceraldehyde 3-phosphate + L-glutamine = pyridoxal 5'-phosphate + L-glutamate + phosphate + 3 H2O + H(+). The protein operates within cofactor biosynthesis; pyridoxal 5'-phosphate biosynthesis. Catalyzes the formation of pyridoxal 5'-phosphate from ribose 5-phosphate (RBP), glyceraldehyde 3-phosphate (G3P) and ammonia. The ammonia is provided by the PdxT subunit. Can also use ribulose 5-phosphate and dihydroxyacetone phosphate as substrates, resulting from enzyme-catalyzed isomerization of RBP and G3P, respectively. The protein is Pyridoxal 5'-phosphate synthase subunit PdxS of Bacillus anthracis (strain A0248).